The primary structure comprises 298 residues: Protease HtpX homolog (298 aa).

Transmembrane regions (helical) follow at residues 14-34 (VVLL…AGYL) and 39-59 (YAMG…SMIF). Histidine 143 contacts Zn(2+). Residue glutamate 144 is part of the active site. Histidine 147 is a Zn(2+) binding site. A run of 2 helical transmembrane segments spans residues 158–178 (IAVA…RMLW) and 197–217 (IITL…ASLI). Glutamate 226 contacts Zn(2+).

The protein belongs to the peptidase M48B family. Zn(2+) serves as cofactor.

The protein resides in the cell membrane. The chain is Protease HtpX homolog from Streptococcus pyogenes serotype M6 (strain ATCC BAA-946 / MGAS10394).